The chain runs to 511 residues: Lysine--tRNA ligase (511 aa).

The Mg(2+) site is built by Glu403 and Glu410.

The protein belongs to the class-II aminoacyl-tRNA synthetase family. Homodimer. The cofactor is Mg(2+).

It is found in the cytoplasm. It catalyses the reaction tRNA(Lys) + L-lysine + ATP = L-lysyl-tRNA(Lys) + AMP + diphosphate. The sequence is that of Lysine--tRNA ligase from Onion yellows phytoplasma (strain OY-M).